The chain runs to 334 residues: Glyceraldehyde-3-phosphate dehydrogenase (334 aa).

NAD(+) is bound by residues 10-11 (RI), Asp-33, Lys-77, and Thr-119. Residues 149–151 (SCT), Thr-180, 209–210 (TG), and Arg-232 contribute to the D-glyceraldehyde 3-phosphate site. The active-site Nucleophile is the Cys-150. Position 314 (Asn-314) interacts with NAD(+).

It belongs to the glyceraldehyde-3-phosphate dehydrogenase family. As to quaternary structure, homotetramer.

The protein localises to the cytoplasm. The catalysed reaction is D-glyceraldehyde 3-phosphate + phosphate + NAD(+) = (2R)-3-phospho-glyceroyl phosphate + NADH + H(+). It participates in carbohydrate degradation; glycolysis; pyruvate from D-glyceraldehyde 3-phosphate: step 1/5. Its function is as follows. Catalyzes the oxidative phosphorylation of glyceraldehyde 3-phosphate (G3P) to 1,3-bisphosphoglycerate (BPG) using the cofactor NAD. The first reaction step involves the formation of a hemiacetal intermediate between G3P and a cysteine residue, and this hemiacetal intermediate is then oxidized to a thioester, with concomitant reduction of NAD to NADH. The reduced NADH is then exchanged with the second NAD, and the thioester is attacked by a nucleophilic inorganic phosphate to produce BPG. The protein is Glyceraldehyde-3-phosphate dehydrogenase (gap) of Chlamydia trachomatis serovar D (strain ATCC VR-885 / DSM 19411 / UW-3/Cx).